A 608-amino-acid chain; its full sequence is Serine/threonine-protein kinase BUR1 (608 aa).

The 308-residue stretch at 39 to 346 (YEIIQKLGQG…ALDALNHNYF (308 aa)) folds into the Protein kinase domain. ATP contacts are provided by residues 45 to 53 (LGQGTFGVV) and lysine 68. Aspartate 174 serves as the catalytic Proton acceptor. 2 disordered regions span residues 383 to 419 (HEANKIPKAHFPKGPGEYNNSNNYPRNRNGSFPLALP) and 443 to 571 (YIPK…FDED). Residues 400 to 411 (YNNSNNYPRNRN) show a composition bias toward low complexity. Residues 471 to 482 (LRDRSPRREGHI) show a composition bias toward basic and acidic residues. Residues 487 to 502 (STTNSNNISSNSSASN) show a composition bias toward low complexity. Composition is skewed to polar residues over residues 503–512 (VGGTLSNPTH) and 539–548 (PQSSSRNVSD). Positions 559–571 (EQNESDLTDFDED) are enriched in acidic residues.

Belongs to the protein kinase superfamily. CMGC Ser/Thr protein kinase family. CDC2/CDKX subfamily.

The protein resides in the nucleus. It catalyses the reaction L-seryl-[protein] + ATP = O-phospho-L-seryl-[protein] + ADP + H(+). The enzyme catalyses L-threonyl-[protein] + ATP = O-phospho-L-threonyl-[protein] + ADP + H(+). The catalysed reaction is [DNA-directed RNA polymerase] + ATP = phospho-[DNA-directed RNA polymerase] + ADP + H(+). Its function is as follows. Serine/threonine-protein kinase involved in transcription regulation. Phosphorylates the UBC2/RAD6 ubiquitin-conjugating enzyme (E2), leading to monoubiquitination of histone H2B and the silencing of telomeric-associated genes. Also required for histone H3 methylation. Necessary for the recovery from pheromone-induced growth arrest in the cell cycle G1 phase. The protein is Serine/threonine-protein kinase BUR1 (BUR1) of Debaryomyces hansenii (strain ATCC 36239 / CBS 767 / BCRC 21394 / JCM 1990 / NBRC 0083 / IGC 2968) (Yeast).